Consider the following 294-residue polypeptide: MKNPCNVIAIIGKPRDQQAIQTHKELYEWLTSEGYKVFIDDRLAAILDEIPQNHFASLVELGKNADLAIVVGGDGNMLGAARILSRFDVPVIGVNRGNLGFLTDLNPDDFQAALKAVLAGEYIEEERFLLEAEVHRHGQIKSHNAALNEAVLHPGQIAHMIEFEVYIDESFAFSLRADGLIVSTPTGSTAYSLSGGGPILSPSLNAISLVPMFPHTLSSRPLVVDGKRRIKLIVSPENRGTQEVSCDGQVSLPVSPGDEIHIYQSPNVLKLIHPKDYSYYHVLRNKLGWSSKLF.

Catalysis depends on D74, which acts as the Proton acceptor. Residues D74–G75, N148–E149, H159, R176, D178, T189–S194, and Q249 contribute to the NAD(+) site.

It belongs to the NAD kinase family. A divalent metal cation is required as a cofactor.

It localises to the cytoplasm. It carries out the reaction NAD(+) + ATP = ADP + NADP(+) + H(+). Functionally, involved in the regulation of the intracellular balance of NAD and NADP, and is a key enzyme in the biosynthesis of NADP. Catalyzes specifically the phosphorylation on 2'-hydroxyl of the adenosine moiety of NAD to yield NADP. This Vibrio parahaemolyticus serotype O3:K6 (strain RIMD 2210633) protein is NAD kinase.